Here is a 161-residue protein sequence, read N- to C-terminus: Transcription antitermination protein NusB (161 aa).

Belongs to the NusB family.

Its function is as follows. Involved in transcription antitermination. Required for transcription of ribosomal RNA (rRNA) genes. Binds specifically to the boxA antiterminator sequence of the ribosomal RNA (rrn) operons. This chain is Transcription antitermination protein NusB, found in Nitrobacter winogradskyi (strain ATCC 25391 / DSM 10237 / CIP 104748 / NCIMB 11846 / Nb-255).